The chain runs to 227 residues: Sensory transduction protein RegX3 (227 aa).

Residues S3–L116 enclose the Response regulatory domain. The residue at position 52 (D52) is a 4-aspartylphosphate. Residues D128 to G227 constitute a DNA-binding region (ompR/PhoB-type).

Post-translationally, phosphorylated by SenX3.

Functionally, member of the two-component regulatory system SenX3/RegX3. Specifically binds to the promoter region of the senX3-regX3 operon. The polypeptide is Sensory transduction protein RegX3 (Mycobacterium bovis (strain ATCC BAA-935 / AF2122/97)).